Reading from the N-terminus, the 562-residue chain is Potassium-transporting ATPase potassium-binding subunit (562 aa).

12 helical membrane-spanning segments follow: residues 6 to 26 (FLLIASFMVVLFVLSRPLGGF), 62 to 82 (YALAILCFNLLGIVLLFVLLM), 132 to 152 (GLTVQNFLSAATGIAVAFALI), 175 to 195 (LYVLLPIALIIALIFVSQGVL), 253 to 273 (FVQMLAIFLIPCALCFAFGQV), 283 to 303 (LIWAMSLIFIVAVVVVMYAEL), 327 to 347 (FGILATSLYAVVTTAASCGAV), 356 to 376 (ALGGMIPLWLMQIGEVVFGGV), 379 to 399 (GLYGMLLFVLLTVFIAGLMIG), 416 to 436 (MTALAILVTPTIVLLGTALAL), 483 to 503 (LLLAAAMFIGRFGVILPVLAI), and 526 to 546 (LFIGLLIGTVLLVGALTFIPA).

It belongs to the KdpA family. The system is composed of three essential subunits: KdpA, KdpB and KdpC.

Its subcellular location is the cell inner membrane. Its function is as follows. Part of the high-affinity ATP-driven potassium transport (or Kdp) system, which catalyzes the hydrolysis of ATP coupled with the electrogenic transport of potassium into the cytoplasm. This subunit binds the periplasmic potassium ions and delivers the ions to the membrane domain of KdpB through an intramembrane tunnel. In Yersinia pseudotuberculosis serotype IB (strain PB1/+), this protein is Potassium-transporting ATPase potassium-binding subunit.